Here is a 345-residue protein sequence, read N- to C-terminus: 3-isopropylmalate dehydrogenase (345 aa).

Substrate-binding residues include Arg94, Arg104, Arg132, and Asp216. Positions 216, 240, and 244 each coordinate Mg(2+). Position 274-286 (274-286 (GSAPDIAGQGIAN)) interacts with NAD(+).

It belongs to the isocitrate and isopropylmalate dehydrogenases family. LeuB type 1 subfamily. As to quaternary structure, homodimer. Mg(2+) serves as cofactor. It depends on Mn(2+) as a cofactor.

The protein localises to the cytoplasm. The catalysed reaction is (2R,3S)-3-isopropylmalate + NAD(+) = 4-methyl-2-oxopentanoate + CO2 + NADH. The protein operates within amino-acid biosynthesis; L-leucine biosynthesis; L-leucine from 3-methyl-2-oxobutanoate: step 3/4. Catalyzes the oxidation of 3-carboxy-2-hydroxy-4-methylpentanoate (3-isopropylmalate) to 3-carboxy-4-methyl-2-oxopentanoate. The product decarboxylates to 4-methyl-2 oxopentanoate. This chain is 3-isopropylmalate dehydrogenase, found in Streptococcus pneumoniae (strain ATCC BAA-255 / R6).